The following is a 690-amino-acid chain: Methionine--tRNA ligase (690 aa).

The 'HIGH' region motif lies at 20 to 30 (PYANGSIHLGH). Residues cysteine 151, cysteine 154, cysteine 164, and cysteine 167 each coordinate Zn(2+). The short motif at 337–341 (KMSKS) is the 'KMSKS' region element. Lysine 340 provides a ligand contact to ATP. The tRNA-binding domain occupies 589–690 (DFAKVDLRIA…EGAQPGMRVM (102 aa)).

Belongs to the class-I aminoacyl-tRNA synthetase family. MetG type 1 subfamily. In terms of assembly, homodimer. Requires Zn(2+) as cofactor.

It is found in the cytoplasm. It catalyses the reaction tRNA(Met) + L-methionine + ATP = L-methionyl-tRNA(Met) + AMP + diphosphate. In terms of biological role, is required not only for elongation of protein synthesis but also for the initiation of all mRNA translation through initiator tRNA(fMet) aminoacylation. The polypeptide is Methionine--tRNA ligase (Vibrio vulnificus (strain CMCP6)).